The following is a 1347-amino-acid chain: Protocadherin-11 X-linked (1347 aa).

An N-terminal signal peptide occupies residues 1–23; the sequence is MDLLSGTYIFAVLLACVVFHSGA. Over 24 to 812 the chain is Extracellular; sequence QEKNYTIREE…VSSPTSDYVK (789 aa). Cadherin domains follow at residues 26–139, 140–249, 250–355, 362–466, 467–570, 571–673, and 677–795; these read KNYT…APLF, PATV…HPVF, KETE…VPSI, NPIN…APVF, TQSF…SPVF, THNE…KPVF, and PSNY…APVT. N-linked (GlcNAc...) asparagine glycans are attached at residues Asn27, Asn48, and Asn54. A glycan (N-linked (GlcNAc...) asparagine) is linked at Asn344. A glycan (N-linked (GlcNAc...) asparagine) is linked at Asn553. Asn773 carries N-linked (GlcNAc...) asparagine glycosylation. The chain crosses the membrane as a helical span at residues 813–833; sequence ILVAAVAGTVTVVVVIFITAV. The Cytoplasmic portion of the chain corresponds to 834–1347; that stretch reads VRCRQAPHLK…DSPIMEEHPL (514 aa). 4 disordered regions span residues 1031-1050, 1057-1091, 1097-1116, and 1325-1347; these read IWIH…GKSQ, LPEG…GYPQ, RATP…ESTF, and TFTP…EHPL.

Its subcellular location is the cell membrane. Its function is as follows. Potential calcium-dependent cell-adhesion protein. In Pongo pygmaeus (Bornean orangutan), this protein is Protocadherin-11 X-linked (PCDH11X).